Consider the following 240-residue polypeptide: Chromatin structure-remodeling complex protein BSH (240 aa).

The protein belongs to the SNF5 family. As to quaternary structure, interacts with SWI3A and SWI3B, but not with BRM. In terms of tissue distribution, expressed in roots, stems, leaves, flowers and siliques.

It is found in the nucleus. Component of a multiprotein complex equivalent of the yeast SWI/SNF complex, an ATP-dependent chromatin-remodeling complex, which is required for the positive and negative regulation of gene expression of a large number of genes. It changes chromatin structure by altering DNA-histone contacts within a nucleosome, leading eventually to a change in nucleosome position, thus facilitating or repressing binding of gene-specific transcription factors. The protein is Chromatin structure-remodeling complex protein BSH (BSH) of Arabidopsis thaliana (Mouse-ear cress).